A 129-amino-acid chain; its full sequence is Small ribosomal subunit protein uS11 (129 aa).

It belongs to the universal ribosomal protein uS11 family. In terms of assembly, part of the 30S ribosomal subunit. Interacts with proteins S7 and S18. Binds to IF-3.

In terms of biological role, located on the platform of the 30S subunit, it bridges several disparate RNA helices of the 16S rRNA. Forms part of the Shine-Dalgarno cleft in the 70S ribosome. This Rhodopseudomonas palustris (strain HaA2) protein is Small ribosomal subunit protein uS11.